A 468-amino-acid polypeptide reads, in one-letter code: 3-isopropylmalate dehydratase large subunit (468 aa).

[4Fe-4S] cluster-binding residues include Cys349, Cys409, and Cys412.

Belongs to the aconitase/IPM isomerase family. LeuC type 1 subfamily. Heterodimer of LeuC and LeuD. Requires [4Fe-4S] cluster as cofactor.

It carries out the reaction (2R,3S)-3-isopropylmalate = (2S)-2-isopropylmalate. Its pathway is amino-acid biosynthesis; L-leucine biosynthesis; L-leucine from 3-methyl-2-oxobutanoate: step 2/4. Catalyzes the isomerization between 2-isopropylmalate and 3-isopropylmalate, via the formation of 2-isopropylmaleate. This Ruegeria pomeroyi (strain ATCC 700808 / DSM 15171 / DSS-3) (Silicibacter pomeroyi) protein is 3-isopropylmalate dehydratase large subunit.